The chain runs to 277 residues: Large ribosomal subunit protein uL2 (277 aa).

Positions 199–277 are disordered; that stretch reads DHMNTSVGKA…ILISRHKRKK (79 aa). The span at 209 to 220 shows a compositional bias: basic residues; it reads GRTRWMGRRPHN.

It belongs to the universal ribosomal protein uL2 family. In terms of assembly, part of the 50S ribosomal subunit. Forms a bridge to the 30S subunit in the 70S ribosome.

Its function is as follows. One of the primary rRNA binding proteins. Required for association of the 30S and 50S subunits to form the 70S ribosome, for tRNA binding and peptide bond formation. It has been suggested to have peptidyltransferase activity; this is somewhat controversial. Makes several contacts with the 16S rRNA in the 70S ribosome. In Nitrobacter winogradskyi (strain ATCC 25391 / DSM 10237 / CIP 104748 / NCIMB 11846 / Nb-255), this protein is Large ribosomal subunit protein uL2.